We begin with the raw amino-acid sequence, 424 residues long: Geranylgeranyl pyrophosphate synthase D (424 aa).

Positions 42–73 (PSATWPSVPKVHKRNRSTSLSDQQTAKKAHAN) are disordered. The span at 58–67 (STSLSDQQTA) shows a compositional bias: polar residues. The isopentenyl diphosphate site is built by Lys147, Arg150, and His179. The Mg(2+) site is built by Asp186 and Asp190. Arg195 is a binding site for dimethylallyl diphosphate. Position 196 (Arg196) interacts with isopentenyl diphosphate. Lys274, Thr275, Gln311, Lys328, and Lys338 together coordinate dimethylallyl diphosphate.

Belongs to the FPP/GGPP synthase family. Mg(2+) serves as cofactor.

It is found in the cytoplasm. The catalysed reaction is isopentenyl diphosphate + dimethylallyl diphosphate = (2E)-geranyl diphosphate + diphosphate. It carries out the reaction isopentenyl diphosphate + (2E)-geranyl diphosphate = (2E,6E)-farnesyl diphosphate + diphosphate. It catalyses the reaction isopentenyl diphosphate + (2E,6E)-farnesyl diphosphate = (2E,6E,10E)-geranylgeranyl diphosphate + diphosphate. It participates in isoprenoid biosynthesis; farnesyl diphosphate biosynthesis; farnesyl diphosphate from geranyl diphosphate and isopentenyl diphosphate: step 1/1. It functions in the pathway isoprenoid biosynthesis; geranyl diphosphate biosynthesis; geranyl diphosphate from dimethylallyl diphosphate and isopentenyl diphosphate: step 1/1. Its pathway is isoprenoid biosynthesis; geranylgeranyl diphosphate biosynthesis; geranylgeranyl diphosphate from farnesyl diphosphate and isopentenyl diphosphate: step 1/1. Its function is as follows. Catalyzes the trans-addition of the 3 molecules of isopentenyl diphosphate (IPP) onto dimethylallyl diphosphate (DMAPP) to form geranylgeranyl pyrophosphate (GGDP). This Phomopsis amygdali (Fusicoccum amygdali) protein is Geranylgeranyl pyrophosphate synthase D (GGS-D).